A 202-amino-acid chain; its full sequence is Superoxide dismutase [Mn] (202 aa).

Positions 27, 82, 164, and 168 each coordinate Mn(2+).

Belongs to the iron/manganese superoxide dismutase family. As to quaternary structure, homodimer. It depends on Mn(2+) as a cofactor.

The enzyme catalyses 2 superoxide + 2 H(+) = H2O2 + O2. Its function is as follows. Destroys superoxide anion radicals which are normally produced within the cells and which are toxic to biological systems. The polypeptide is Superoxide dismutase [Mn] (sodA) (Listeria ivanovii).